The chain runs to 338 residues: Acyl-CoA Delta(11) desaturase (338 aa).

The next 2 helical transmembrane spans lie at 33 to 53 (IVYF…YGLY) and 61 to 81 (WATV…VTAG). A Histidine box-1 motif is present at residues 83–88 (HRLWSH). A helical transmembrane segment spans residues 97–117 (LQILLMVMNSLAFQNTVIDWV). Residues 120 to 124 (HRLHH) carry the Histidine box-2 motif. 2 helical membrane passes run 181 to 201 (AIPF…VYGW) and 212 to 234 (AMLR…HIYG). The short motif at 260-264 (HNYHH) is the Histidine box-3 element. Residues 318 to 338 (TNLWGLEDVDTPEDLKNTKGE) form a disordered region.

The protein belongs to the fatty acid desaturase type 1 family. The cofactor is Fe cation. As to expression, detected in the pheromone gland.

Its subcellular location is the membrane. The enzyme catalyses an 11,12-saturated fatty acyl-CoA + 2 Fe(II)-[cytochrome b5] + O2 + 2 H(+) = an (11Z)-Delta(11)-fatty acyl-CoA + 2 Fe(III)-[cytochrome b5] + 2 H2O. Functionally, catalyzes the formation of delta(11) fatty acyl precursors in the pheromone gland, and has high activity towards palmitic acid and stearic acid. The protein is Acyl-CoA Delta(11) desaturase of Spodoptera littoralis (Egyptian cotton leafworm).